Here is a 328-residue protein sequence, read N- to C-terminus: D-cysteine desulfhydrase (328 aa).

K51 is subject to N6-(pyridoxal phosphate)lysine.

This sequence belongs to the ACC deaminase/D-cysteine desulfhydrase family. Homodimer. Requires pyridoxal 5'-phosphate as cofactor.

It carries out the reaction D-cysteine + H2O = hydrogen sulfide + pyruvate + NH4(+) + H(+). In terms of biological role, catalyzes the alpha,beta-elimination reaction of D-cysteine and of several D-cysteine derivatives. It could be a defense mechanism against D-cysteine. In Escherichia coli (strain UTI89 / UPEC), this protein is D-cysteine desulfhydrase.